Consider the following 666-residue polypeptide: Long chain acyl-CoA synthetase 4 (666 aa).

An ATP-binding site is contributed by 228–239; it reads IMYTSGTTGDPK. Residues 495 to 519 form a fatty acid-binding region; sequence DGWLHTGDVGEWQPDGSMKIIDRKK.

The protein belongs to the ATP-dependent AMP-binding enzyme family. It depends on Mg(2+) as a cofactor.

The enzyme catalyses a long-chain fatty acid + ATP + CoA = a long-chain fatty acyl-CoA + AMP + diphosphate. The protein operates within lipid metabolism; fatty acid metabolism. Its function is as follows. Activation of long-chain fatty acids for both synthesis of cellular lipids, and degradation via beta-oxidation. Preferentially uses palmitate, palmitoleate, oleate and linoleate. In Arabidopsis thaliana (Mouse-ear cress), this protein is Long chain acyl-CoA synthetase 4 (LACS4).